The primary structure comprises 450 residues: Signal recognition particle 54 kDa protein (450 aa).

GTP-binding positions include 107-114 (GIQGSGKT), 188-192 (DTAGR), and 247-250 (TKLD).

It belongs to the GTP-binding SRP family. SRP54 subfamily. Part of the signal recognition particle protein translocation system, which is composed of SRP and FtsY. Archaeal SRP consists of a 7S RNA molecule of 300 nucleotides and two protein subunits: SRP54 and SRP19.

Its subcellular location is the cytoplasm. It carries out the reaction GTP + H2O = GDP + phosphate + H(+). Involved in targeting and insertion of nascent membrane proteins into the cytoplasmic membrane. Binds to the hydrophobic signal sequence of the ribosome-nascent chain (RNC) as it emerges from the ribosomes. The SRP-RNC complex is then targeted to the cytoplasmic membrane where it interacts with the SRP receptor FtsY. This Methanococcus maripaludis (strain C5 / ATCC BAA-1333) protein is Signal recognition particle 54 kDa protein.